A 277-amino-acid polypeptide reads, in one-letter code: Thymidylate synthase (277 aa).

Arg21 provides a ligand contact to dUMP. His51 is a (6R)-5,10-methylene-5,6,7,8-tetrahydrofolate binding site. 126–127 (RR) contacts dUMP. The active-site Nucleophile is Cys159. DUMP contacts are provided by residues 179 to 182 (RSAD), Asn190, and 220 to 222 (HLY). Asp182 provides a ligand contact to (6R)-5,10-methylene-5,6,7,8-tetrahydrofolate. A (6R)-5,10-methylene-5,6,7,8-tetrahydrofolate-binding site is contributed by Ser276.

This sequence belongs to the thymidylate synthase family. Bacterial-type ThyA subfamily. Homodimer.

It is found in the cytoplasm. The catalysed reaction is dUMP + (6R)-5,10-methylene-5,6,7,8-tetrahydrofolate = 7,8-dihydrofolate + dTMP. The protein operates within pyrimidine metabolism; dTTP biosynthesis. Its function is as follows. Catalyzes the reductive methylation of 2'-deoxyuridine-5'-monophosphate (dUMP) to 2'-deoxythymidine-5'-monophosphate (dTMP) while utilizing 5,10-methylenetetrahydrofolate (mTHF) as the methyl donor and reductant in the reaction, yielding dihydrofolate (DHF) as a by-product. This enzymatic reaction provides an intracellular de novo source of dTMP, an essential precursor for DNA biosynthesis. The protein is Thymidylate synthase of Teredinibacter turnerae (strain ATCC 39867 / T7901).